The following is a 124-amino-acid chain: Small ribosomal subunit protein bS6 (124 aa).

It belongs to the bacterial ribosomal protein bS6 family.

Its function is as follows. Binds together with bS18 to 16S ribosomal RNA. This is Small ribosomal subunit protein bS6 from Actinobacillus pleuropneumoniae serotype 7 (strain AP76).